Here is a 446-residue protein sequence, read N- to C-terminus: Tubulin alpha chain-like 3 (446 aa).

The short motif at 1–4 is the MREC motif element; it reads MREC. Gln11, Glu78, Ser147, Gly151, Thr152, Thr186, Asn213, and Asn235 together coordinate GTP. Glu78 contributes to the Mg(2+) binding site. Glu261 is an active-site residue.

Belongs to the tubulin family. Dimer of alpha and beta chains. A typical microtubule is a hollow water-filled tube with an outer diameter of 25 nm and an inner diameter of 15 nM. Alpha-beta heterodimers associate head-to-tail to form protofilaments running lengthwise along the microtubule wall with the beta-tubulin subunit facing the microtubule plus end conferring a structural polarity. Microtubules usually have 13 protofilaments but different protofilament numbers can be found in some organisms and specialized cells. Mg(2+) serves as cofactor. Some glutamate residues at the C-terminus are polyglycylated, resulting in polyglycine chains on the gamma-carboxyl group. Glycylation is mainly limited to tubulin incorporated into axonemes (cilia and flagella) whereas glutamylation is prevalent in neuronal cells, centrioles, axonemes, and the mitotic spindle. Both modifications can coexist on the same protein on adjacent residues, and lowering polyglycylation levels increases polyglutamylation, and reciprocally. Cilia and flagella glycylation is required for their stability and maintenance. Flagella glycylation controls sperm motility. In terms of processing, some glutamate residues at the C-terminus are polyglutamylated, resulting in polyglutamate chains on the gamma-carboxyl group. Polyglutamylation plays a key role in microtubule severing by spastin (SPAST). SPAST preferentially recognizes and acts on microtubules decorated with short polyglutamate tails: severing activity by SPAST increases as the number of glutamates per tubulin rises from one to eight, but decreases beyond this glutamylation threshold. Glutamylation is also involved in cilia motility.

Its subcellular location is the cytoplasm. The protein resides in the cytoskeleton. It catalyses the reaction GTP + H2O = GDP + phosphate + H(+). Functionally, tubulin is the major constituent of microtubules, a cylinder consisting of laterally associated linear protofilaments composed of alpha- and beta-tubulin heterodimers. Microtubules grow by the addition of GTP-tubulin dimers to the microtubule end, where a stabilizing cap forms. Below the cap, tubulin dimers are in GDP-bound state, owing to GTPase activity of alpha-tubulin. This Mus musculus (Mouse) protein is Tubulin alpha chain-like 3 (Tubal3).